A 620-amino-acid chain; its full sequence is MLNGEDFVEHNDILSSPAKSRNVTPKRVDPHGERQLRRIHSSKKNLLERISLVGNERKNTSPDPALKPKTPSKAPRKRGRPRKIQEELTDRIKKDEKDTISSKKKRKLDKDTSGNVNEESKTSNNKQVMEKTGIKEKREREKIQVATTTYEDNVTPQTDDNFVSNSPEPPEPATPSKKSLTTNHDFTSPLKQIIMNNLKEYKDSTSPGKLTLSRNFTPTPVPKNKKLYQTSETKSASSFLDTFEGYFDQRKIVRTNAKSRHTMSMAPDVTREEFSLVSNFFNENFQKRPRQKLFEIQKKMFPQYWFELTQGFSLLFYGVGSKRNFLEEFAIDYLSPKIAYSQLAYENELQQNKPVNSIPCLILNGYNPSCNYRDVFKEITDLLVPAELTRSETKYWGNHVILQIQKMIDFYKNQPLDIKLILVVHNLDGPSIRKNTFQTMLSFLSVIRQIAIVASTDHIYAPLLWDNMKAQNYNFVFHDISNFEPSTVESTFQDVMKMGKSDTSSGAEGAKYVLQSLTVNSKKMYKLLIETQMQNMGNLSANTGPKRGTQRTGVELKLFNHLCAADFIASNEIALRSMLREFIEHKMANITKNNSGMEIIWVPYTYAELEKLLKTVLNTL.

A disordered region spans residues 1–184; sequence MLNGEDFVEH…PSKKSLTTNH (184 aa). Polar residues predominate over residues 13–23; that stretch reads ILSSPAKSRNV. The segment covering 26–36 has biased composition (basic and acidic residues); sequence KRVDPHGERQL. Thr-60 carries the post-translational modification Phosphothreonine. Positions 83–101 are enriched in basic and acidic residues; it reads KIQEELTDRIKKDEKDTIS. Over residues 113 to 127 the composition is skewed to polar residues; sequence SGNVNEESKTSNNKQ. Residues 128–143 are compositionally biased toward basic and acidic residues; sequence VMEKTGIKEKREREKI. Over residues 145–166 the composition is skewed to polar residues; the sequence is VATTTYEDNVTPQTDDNFVSNS. The residue at position 187 (Thr-187) is a Phosphothreonine. Ser-188 is subject to Phosphoserine. Residues 204-218 show a composition bias toward polar residues; the sequence is STSPGKLTLSRNFTP. Residues 204–225 form a disordered region; sequence STSPGKLTLSRNFTPTPVPKNK.

This sequence belongs to the ORC2 family. In terms of assembly, component of the origin recognition complex (ORC) composed of at least ORC1, ORC2, ORC3, ORC4, ORC5 and ORC6. Interacts with MCM10 and TAH11.

It localises to the nucleus. Its function is as follows. Component of the origin recognition complex (ORC) that binds origins of replication. It has a role in both chromosomal replication and mating type transcriptional silencing. Binds to the ARS consensus sequence (ACS) of origins of replication. In Saccharomyces cerevisiae (strain ATCC 204508 / S288c) (Baker's yeast), this protein is Origin recognition complex subunit 2 (ORC2).